A 439-amino-acid chain; its full sequence is MSIDVNWRSATYGPDGEALAERIRSFIHDRFQQVALPRFIRSVQVHAFDFGTIPPELEIKDFCEPFADFYEEDDDDHTSDASEELGSEHSSQWNRTHPELNEPSYREDTAVNHSLRDPFPDGFPTSPLRSPLGEHLNPHFLPRAGTPGIPGGTSTLGYHLMSLGGLSGTQTPLAAVAGGNPFASGWSDSGMGPGNRGRSERHAGMKHQRAEPEIDTSNSTSRPSTANTLPSHPSSSSKNSGQGATGRNDHPSLHAGEHIEDPVAPGHLPLPPRMRERRPEDFQVLCHVKYAGDVRLSLTAEILLDYPMPSFVGLPLKLNVTGITFDGVAVIAYIRKRVHFCFLSAEDADALIGSEQQQQQESAGDDHRPQSRPDSSASASQKRHGGLLQEIRVESEIGRKEDGKQVLKNVGKVERFVLAQVRRIFEEELVYPSFWTFLI.

Residues 1-439 enclose the SMP-LTD domain; it reads MSIDVNWRSA…VYPSFWTFLI (439 aa). The segment covering 70 to 85 has biased composition (acidic residues); the sequence is YEEDDDDHTSDASEEL. 3 disordered regions span residues 70–102, 184–274, and 353–386; these read YEED…ELNE, SGWS…PPRM, and GSEQ…RHGG. Residues 197 to 212 show a composition bias toward basic and acidic residues; sequence GRSERHAGMKHQRAEP. A compositionally biased stretch (polar residues) spans 215–230; sequence DTSNSTSRPSTANTLP. Positions 231–240 are enriched in low complexity; the sequence is SHPSSSSKNS. Residues 247–261 show a composition bias toward basic and acidic residues; the sequence is RNDHPSLHAGEHIED.

It belongs to the MDM12 family. As to quaternary structure, component of the ER-mitochondria encounter structure (ERMES) or MDM complex, composed of mmm1, mdm10, mdm12 and mdm34. A mmm1 homodimer associates with one molecule of mdm12 on each side in a pairwise head-to-tail manner, and the SMP-LTD domains of mmm1 and mdm12 generate a continuous hydrophobic tunnel for phospholipid trafficking.

It is found in the mitochondrion outer membrane. The protein localises to the endoplasmic reticulum membrane. Component of the ERMES/MDM complex, which serves as a molecular tether to connect the endoplasmic reticulum (ER) and mitochondria. Components of this complex are involved in the control of mitochondrial shape and protein biogenesis, and function in nonvesicular lipid trafficking between the ER and mitochondria. Mdm12 is required for the interaction of the ER-resident membrane protein mmm1 and the outer mitochondrial membrane-resident beta-barrel protein mdm10. The mdm12-mmm1 subcomplex functions in the major beta-barrel assembly pathway that is responsible for biogenesis of all mitochondrial outer membrane beta-barrel proteins, and acts in a late step after the SAM complex. The mdm10-mdm12-mmm1 subcomplex further acts in the TOM40-specific pathway after the action of the mdm12-mmm1 complex. Essential for establishing and maintaining the structure of mitochondria and maintenance of mtDNA nucleoids. In Neosartorya fischeri (strain ATCC 1020 / DSM 3700 / CBS 544.65 / FGSC A1164 / JCM 1740 / NRRL 181 / WB 181) (Aspergillus fischerianus), this protein is Mitochondrial distribution and morphology protein 12.